A 297-amino-acid chain; its full sequence is Urease accessory protein UreD (297 aa).

The protein belongs to the UreD family. As to quaternary structure, ureD, UreF and UreG form a complex that acts as a GTP-hydrolysis-dependent molecular chaperone, activating the urease apoprotein by helping to assemble the nickel containing metallocenter of UreC. The UreE protein probably delivers the nickel.

Its subcellular location is the cytoplasm. In terms of biological role, required for maturation of urease via the functional incorporation of the urease nickel metallocenter. The polypeptide is Urease accessory protein UreD (Prochlorococcus marinus subsp. pastoris (strain CCMP1986 / NIES-2087 / MED4)).